Here is an 865-residue protein sequence, read N- to C-terminus: MSDVSTSVQSKFARLAKKKENITYMKREQLTETDKDIAPVLDLKCKDVSAIMNKFKVLMEIQDLMFEEMRETLKNDLKAVLGGKATIPEVKNSENSSSRTEFQQIINLALQKTGMVGKIEGENSKIGDDNENLTFKLEVNELSGKLDNTNEYNSNDGKKLPQGESRSYEVMGSMEETLCNIDDRDGNRNVHLEFTERESRKDGEDEFVKEMREERKFQKLKNKEEVLKASREEKVLMDEGAVLTLVADLSSATLDISKQWSNVFNILRENDFEPKFLCEVKLAFKCDGEIKTFSDLQSLRKFASQKSSVKELLKDVLPQKEEINQGGRKYGIQEKRDKTLIDSKHRAGEITSDGLSFLFLKEVKVAKPEEMKNLETQEEEFSELEELDEEASGMEDDEDTSGLEEEEEEPSGLEEEEEEEASGLEEDEASGLEEEEEQTSEQDSTFQGHTLVDAKHEVEITSDGMETTFIDSVEDSESEEEEEGKSSETGKVKTTSLTEKKASRRQKEIPFSYLVGDSGKKKLVKHQVVHKTQEEEETAVPTSQGTGTPCLTLCLASPSKSLEMSHDEHKKHSHTNLSISTGVTKLKKTEEKKHRTLHTEELTSKEADLTEETEENLRSSVINSIREIKEEIGNLKSSHSGVLEIENSVDDLSSRMDILEERIDSLEDQIEEFSKDTMQMTKQIISKERQRDIEERSRSCNIRLIGIPEKESYENRAEDIIKEIIDENFAELKKGSSLEIVSACRVPSKIDEKRLTPRHILVKFWNSSDKEKIIRASRERREITYQGTRIRLTADLSLDTLDARSKWSNVFKVLLEKGFNPRILYPAKMAFDFRGKTKVFLSIEEFRDYVLHMPTLRELLGNNIP.

At Ser-2 the chain carries N-acetylserine. Ser-2 bears the Phosphoserine mark. Thr-149 is subject to Phosphothreonine. A Phosphoserine modification is found at Ser-154. The segment at 370–508 is disordered; it reads EMKNLETQEE…EKKASRRQKE (139 aa). 2 stretches are compositionally biased toward acidic residues: residues 376–440 and 472–483; these read TQEE…EQTS and SVEDSESEEEEE. Residues Ser-472, Ser-476, and Ser-478 each carry the phosphoserine modification. Basic and acidic residues predominate over residues 498–508; the sequence is TEKKASRRQKE. 3 positions are modified to phosphoserine: Ser-518, Ser-561, and Ser-573. Basic and acidic residues predominate over residues 590–608; it reads EEKKHRTLHTEELTSKEAD. Residues 590–612 form a disordered region; that stretch reads EEKKHRTLHTEELTSKEADLTEE. Phosphoserine is present on residues Ser-640, Ser-648, and Ser-665. A coiled-coil region spans residues 642–684; that stretch reads VLEIENSVDDLSSRMDILEERIDSLEDQIEEFSKDTMQMTKQI.

This sequence belongs to the transposase 22 family.

The chain is LINE-1 type transposase domain-containing protein 1 (L1TD1) from Homo sapiens (Human).